A 130-amino-acid polypeptide reads, in one-letter code: Small ribosomal subunit protein uS11 (130 aa).

It belongs to the universal ribosomal protein uS11 family. As to quaternary structure, part of the 30S ribosomal subunit. Interacts with proteins S7 and S18. Binds to IF-3.

Its function is as follows. Located on the platform of the 30S subunit, it bridges several disparate RNA helices of the 16S rRNA. Forms part of the Shine-Dalgarno cleft in the 70S ribosome. This is Small ribosomal subunit protein uS11 from Xylella fastidiosa (strain M23).